A 565-amino-acid chain; its full sequence is Glycine/sarcosine/dimethylglycine N-methyltransferase (565 aa).

Basic and acidic residues predominate over residues 1–10; sequence MTKSVDDLAR. The disordered stretch occupies residues 1-34; that stretch reads MTKSVDDLARGDQAGDEQDPVHREQQTFGDNPLE. Residues Y45, W53, R62, A86, D107, 134–135, and L152 each bind S-adenosyl-L-methionine; that span reads DW. The substrate site is built by N154, R187, and Y226.

It belongs to the class I-like SAM-binding methyltransferase superfamily. Glycine N-methyltransferase family. In terms of assembly, monomer.

The enzyme catalyses glycine + 2 S-adenosyl-L-methionine = N,N-dimethylglycine + 2 S-adenosyl-L-homocysteine + 2 H(+). It carries out the reaction sarcosine + 2 S-adenosyl-L-methionine = glycine betaine + 2 S-adenosyl-L-homocysteine + 2 H(+). It catalyses the reaction glycine + S-adenosyl-L-methionine = sarcosine + S-adenosyl-L-homocysteine + H(+). The catalysed reaction is sarcosine + S-adenosyl-L-methionine = N,N-dimethylglycine + S-adenosyl-L-homocysteine + H(+). The enzyme catalyses N,N-dimethylglycine + S-adenosyl-L-methionine = glycine betaine + S-adenosyl-L-homocysteine + H(+). It functions in the pathway amine and polyamine biosynthesis; betaine biosynthesis via glycine pathway; betaine from glycine: step 1/3. The protein operates within amine and polyamine biosynthesis; betaine biosynthesis via glycine pathway; betaine from glycine: step 2/3. It participates in amine and polyamine biosynthesis; betaine biosynthesis via glycine pathway; betaine from glycine: step 3/3. Its function is as follows. Catalyzes the methylation of glycine, sarcosine and dimethylglycine to sarcosine, dimethylglycine and betaine, respectively, with S-adenosylmethionine (AdoMet) acting as the methyl donor. Shows low level of activity on glycine when expressed in E.coli. The sequence is that of Glycine/sarcosine/dimethylglycine N-methyltransferase from Actinopolyspora halophila.